Consider the following 250-residue polypeptide: tRNA (guanine-N(1)-)-methyltransferase (250 aa).

S-adenosyl-L-methionine is bound by residues glycine 114 and 134-139 (IGDYVL).

The protein belongs to the RNA methyltransferase TrmD family. As to quaternary structure, homodimer.

Its subcellular location is the cytoplasm. It catalyses the reaction guanosine(37) in tRNA + S-adenosyl-L-methionine = N(1)-methylguanosine(37) in tRNA + S-adenosyl-L-homocysteine + H(+). In terms of biological role, specifically methylates guanosine-37 in various tRNAs. This Moorella thermoacetica (strain ATCC 39073 / JCM 9320) protein is tRNA (guanine-N(1)-)-methyltransferase.